The following is a 546-amino-acid chain: Germacrene-D synthase (546 aa).

Mg(2+) is bound by residues D303, D307, D448, and E456. A DDXXD motif motif is present at residues 303 to 307 (DDIYD).

Belongs to the terpene synthase family. Requires Mg(2+) as cofactor. Mn(2+) is required as a cofactor.

It carries out the reaction (2E,6E)-farnesyl diphosphate = (-)-germacrene D + diphosphate. It functions in the pathway secondary metabolite biosynthesis; terpenoid biosynthesis. Functionally, sesquiterpene synthase that catalyzes the formation of germacrene D from trans,trans-farnesyl diphosphate (FPP). This is Germacrene-D synthase (GDS) from Ocimum basilicum (Sweet basil).